A 245-amino-acid polypeptide reads, in one-letter code: Transmembrane protein 116 (245 aa).

The next 4 helical transmembrane spans lie at 24–44 (MAFV…FCLG), 88–108 (GIAI…VLLI), 141–161 (FYPV…IIKL), and 173–195 (LYVL…YGWT).

It localises to the membrane. This is Transmembrane protein 116 (TMEM116) from Homo sapiens (Human).